The following is a 170-amino-acid chain: Protein-export protein SecB (170 aa).

Belongs to the SecB family. In terms of assembly, homotetramer, a dimer of dimers. One homotetramer interacts with 1 SecA dimer.

The protein localises to the cytoplasm. One of the proteins required for the normal export of preproteins out of the cell cytoplasm. It is a molecular chaperone that binds to a subset of precursor proteins, maintaining them in a translocation-competent state. It also specifically binds to its receptor SecA. In Xanthomonas campestris pv. campestris (strain 8004), this protein is Protein-export protein SecB.